The primary structure comprises 347 residues: Nuclear distribution protein nudE-like 1 (347 aa).

Residues 28 to 190 (QSFQEARDEL…LAVRERQQEV (163 aa)) are a coiled coil. The segment at 56–166 (VQAEQRNRDL…LDEKESLLVS (111 aa)) is self-association. Residues 64–189 (DLQADNQRLK…ELAVRERQQE (126 aa)) are interaction with KATNB1. Positions 114-133 (YVRELEQANDDLERAKRATI) are required for interaction with PAFAH1B1. An interaction with CENPF region spans residues 175–347 (RDLRQELAVR…SAPGMLPLSV (173 aa)). The interval 189–256 (EVTRKSAPSS…SARISALNIV (68 aa)) is interaction with YWHAE. The interaction with NEFL stretch occupies residues 191-347 (TRKSAPSSPT…SAPGMLPLSV (157 aa)). Residues 195 to 256 (APSSPTLDCE…SARISALNIV (62 aa)) are interaction with KATNA1. Ser215 is subject to Phosphoserine. Thr219 carries the post-translational modification Phosphothreonine; by CDK1 and MAPK1. The residue at position 231 (Ser231) is a Phosphoserine. Residues 241-280 (TSPLTPSARISALNIVGDLLRKVGALESKLAACRNFAKDQ) are interaction with DISC1. The residue at position 242 (Ser242) is a Phosphoserine; by CDK1. Phosphothreonine; by CDK1 and MAPK1 is present on Thr245. Residues 256–291 (VGDLLRKVGALESKLAACRNFAKDQASRKSYISGNV) are required for localization to the centrosome and interaction with dynein, dynactin, tubulin gamma, PCM1 and PCNT. Cys273 is lipidated: S-palmitoyl cysteine; by ZDHHC2, ZDHHC3 and ZDHHC7. The tract at residues 314–347 (KGAVNGFDPAPPPPDPGLGSSRPSSAPGMLPLSV) is disordered. Ser346 is subject to Phosphoserine.

Belongs to the nudE family. As to quaternary structure, self-associates. Interacts with DISC1, dynein, dynactin, tubulin gamma, KATNA1, KATNB1, microtubules, PAFAH1B1, PCM1, PCNT, and YWHAE. Interacts directly with NEFL and indirectly with NEFH. Interacts (via C-terminus) with CENPF. Interacts with ZNF365. Interacts with PLEKHM1 (via N- and C-terminus). Interacts with GTP-bound RAB9A; the interaction may lead to RAB9A-dynein motor tethering. Phosphorylated in mitosis. Can be phosphorylated by CDK1, CDK5 and MAPK1. Phosphorylation by CDK5 promotes interaction with KATNA1 and YWHAE. Post-translationally, palmitoylation at Cys-273 reduces affinity for dynein.

It is found in the cytoplasm. It localises to the cytoskeleton. Its subcellular location is the microtubule organizing center. The protein resides in the centrosome. The protein localises to the chromosome. It is found in the centromere. It localises to the kinetochore. Its subcellular location is the spindle. Functionally, required for organization of the cellular microtubule array and microtubule anchoring at the centrosome. May regulate microtubule organization at least in part by targeting the microtubule severing protein KATNA1 to the centrosome. Also positively regulates the activity of the minus-end directed microtubule motor protein dynein. May enhance dynein-mediated microtubule sliding by targeting dynein to the microtubule plus ends. Required for several dynein- and microtubule-dependent processes such as the maintenance of Golgi integrity, the centripetal motion of secretory vesicles and the coupling of the nucleus and centrosome. Also required during brain development for the migration of newly formed neurons from the ventricular/subventricular zone toward the cortical plate. Required for mitosis in some cell types but appears to be dispensible for mitosis in cortical neuronal progenitors, which instead requires NDE1. Facilitates the polymerization of neurofilaments from the individual subunits NEFH and NEFL. Positively regulates lysosome peripheral distribution and ruffled border formation in osteoclasts. Plays a role, together with DISC1, in the regulation of neurite outgrowth. May act as a RAB9A/B effector that tethers RAB9-associated late endosomes to the dynein motor for their retrograde transport to the trans-Golgi network. This Macaca fascicularis (Crab-eating macaque) protein is Nuclear distribution protein nudE-like 1 (NDEL1).